The primary structure comprises 152 residues: Large ribosomal subunit protein bL9 (152 aa).

Belongs to the bacterial ribosomal protein bL9 family.

Binds to the 23S rRNA. This chain is Large ribosomal subunit protein bL9, found in Synechocystis sp. (strain ATCC 27184 / PCC 6803 / Kazusa).